The following is a 195-amino-acid chain: NADH-quinone oxidoreductase subunit I (195 aa).

2 consecutive 4Fe-4S ferredoxin-type domains span residues Leu44–Ala74 and Gln90–Glu119. Residues Cys54, Cys57, Cys60, Cys64, Cys99, Cys102, Cys105, and Cys109 each contribute to the [4Fe-4S] cluster site. Positions Met145 to Lys195 are disordered. The segment covering Ala168–Glu181 has biased composition (low complexity). Residues Ala184–Lys195 are compositionally biased toward basic and acidic residues.

The protein belongs to the complex I 23 kDa subunit family. NDH-1 is composed of 14 different subunits. Subunits NuoA, H, J, K, L, M, N constitute the membrane sector of the complex. [4Fe-4S] cluster is required as a cofactor.

The protein localises to the cell membrane. The catalysed reaction is a quinone + NADH + 5 H(+)(in) = a quinol + NAD(+) + 4 H(+)(out). Functionally, NDH-1 shuttles electrons from NADH, via FMN and iron-sulfur (Fe-S) centers, to quinones in the respiratory chain. The immediate electron acceptor for the enzyme in this species is believed to be ubiquinone. Couples the redox reaction to proton translocation (for every two electrons transferred, four hydrogen ions are translocated across the cytoplasmic membrane), and thus conserves the redox energy in a proton gradient. This chain is NADH-quinone oxidoreductase subunit I, found in Rhodococcus erythropolis (strain PR4 / NBRC 100887).